We begin with the raw amino-acid sequence, 457 residues long: MMEGQQHGEQLKRGLKNRHIQLIALGGAIGTGLFLGSASVIQSAGPGIILGYAIAGFIAFLIMRQLGEMVVEEPVAGSFSHFAYKYWGSFAGFASGWNYWVLYVLVAMAELTAVGKYIQFWYPEIPTWVSAAVFFVVINAINLTNVKVFGEMEFWFAIIKVIAVVAMIIFGGWLLFSGNGGPQATVSNLWDQGGFLPHGFTGLVMMMAIIMFSFGGLELVGITAAEADNPEQSIPKATNQVIYRILIFYIGSLAVLLSLMPWTRVTADTSPFVLIFHELGDTFVANALNIVVLTAALSVYNSCVYCNSRMLFGLAQQGNAPKALASVDKRGVPVNTILVSALVTALCVLINYLAPESAFGLLMALVVSALVINWAMISLAHMKFRRAKQEQGVVTRFPALLYPLGNWICLLFMAAVLVIMLMTPGMAISVYLIPVWLIVLGIGYLFKEKTAKAVKAH.

The Cytoplasmic portion of the chain corresponds to 1-18 (MMEGQQHGEQLKRGLKNR). Residues 19-39 (HIQLIALGGAIGTGLFLGSAS) form a helical membrane-spanning segment. Topologically, residues 40–42 (VIQ) are periplasmic. The chain crosses the membrane as a helical span at residues 43–63 (SAGPGIILGYAIAGFIAFLIM). Residues 64-98 (RQLGEMVVEEPVAGSFSHFAYKYWGSFAGFASGWN) are Cytoplasmic-facing. The chain crosses the membrane as a helical span at residues 99–119 (YWVLYVLVAMAELTAVGKYIQ). At 120-124 (FWYPE) the chain is on the periplasmic side. A helical membrane pass occupies residues 125 to 145 (IPTWVSAAVFFVVINAINLTN). At 146 to 147 (VK) the chain is on the cytoplasmic side. The chain crosses the membrane as a helical span at residues 148–168 (VFGEMEFWFAIIKVIAVVAMI). At 169–192 (IFGGWLLFSGNGGPQATVSNLWDQ) the chain is on the periplasmic side. The helical transmembrane segment at 193–213 (GGFLPHGFTGLVMMMAIIMFS) threads the bilayer. The Cytoplasmic segment spans residues 214–239 (FGGLELVGITAAEADNPEQSIPKATN). Residues 240-260 (QVIYRILIFYIGSLAVLLSLM) traverse the membrane as a helical segment. The Periplasmic segment spans residues 261–279 (PWTRVTADTSPFVLIFHEL). The chain crosses the membrane as a helical span at residues 280–300 (GDTFVANALNIVVLTAALSVY). The Cytoplasmic segment spans residues 301-330 (NSCVYCNSRMLFGLAQQGNAPKALASVDKR). The chain crosses the membrane as a helical span at residues 331–351 (GVPVNTILVSALVTALCVLIN). The Periplasmic portion of the chain corresponds to 352–359 (YLAPESAF). Residues 360–380 (GLLMALVVSALVINWAMISLA) traverse the membrane as a helical segment. At 381–402 (HMKFRRAKQEQGVVTRFPALLY) the chain is on the cytoplasmic side. Residues 403–423 (PLGNWICLLFMAAVLVIMLMT) traverse the membrane as a helical segment. Residues 424 to 426 (PGM) lie on the Periplasmic side of the membrane. The helical transmembrane segment at 427–447 (AISVYLIPVWLIVLGIGYLFK) threads the bilayer. Residues 448-457 (EKTAKAVKAH) lie on the Cytoplasmic side of the membrane.

It belongs to the amino acid-polyamine-organocation (APC) superfamily. Amino acid transporter (AAT) (TC 2.A.3.1) family.

It localises to the cell inner membrane. The enzyme catalyses L-phenylalanine(in) + H(+)(in) = L-phenylalanine(out) + H(+)(out). The catalysed reaction is L-tryptophan(in) + H(+)(in) = L-tryptophan(out) + H(+)(out). It catalyses the reaction L-tyrosine(in) + H(+)(in) = L-tyrosine(out) + H(+)(out). Strong, mutual inhibition of uptake by tyrosine, phenylalanine, and tryptophan. Transport is also inhibited by the aromatic analogs p-fluorophenylalanine, beta-2-thienylalanine and 5-methyltryptophan. Permease that is involved in the active transport across the cytoplasmic membrane of all three aromatic amino acids, phenylalanine, tyrosine and tryptophan. The sequence is that of Aromatic amino acid transport protein AroP from Escherichia coli (strain K12).